The chain runs to 515 residues: 1-pyrroline-5-carboxylate dehydrogenase (515 aa).

Catalysis depends on residues glutamate 286 and cysteine 320.

It belongs to the aldehyde dehydrogenase family. RocA subfamily.

The enzyme catalyses L-glutamate 5-semialdehyde + NAD(+) + H2O = L-glutamate + NADH + 2 H(+). Its pathway is amino-acid degradation; L-proline degradation into L-glutamate; L-glutamate from L-proline: step 2/2. This is 1-pyrroline-5-carboxylate dehydrogenase from Bacillus cytotoxicus (strain DSM 22905 / CIP 110041 / 391-98 / NVH 391-98).